The chain runs to 59 residues: Large ribosomal subunit protein bL32 (59 aa).

Residues 1–34 are disordered; sequence MAVQKSKVTRSRRGQRRSHDALTGPTLSVDKTTG. The span at 7–16 shows a compositional bias: basic residues; that stretch reads KVTRSRRGQR.

The protein belongs to the bacterial ribosomal protein bL32 family.

This chain is Large ribosomal subunit protein bL32, found in Marinomonas sp. (strain MWYL1).